Reading from the N-terminus, the 449-residue chain is Heterogeneous nuclear ribonucleoprotein H (449 aa).

Met-1 is modified (N-acetylmethionine). Residue Met-2 is modified to N-acetylmethionine; in Heterogeneous nuclear ribonucleoprotein H, N-terminally processed. Positions 11 to 90 constitute an RRM 1 domain; it reads FVVKVRGLPW…RYVEVFKSNN (80 aa). Ser-23 carries the post-translational modification Phosphoserine. Residue Lys-35 forms a Glycyl lysine isopeptide (Lys-Gly) (interchain with G-Cter in SUMO2) linkage. Ser-54 and Ser-63 each carry phosphoserine. Residues Lys-87 and Lys-98 each participate in a glycyl lysine isopeptide (Lys-Gly) (interchain with G-Cter in SUMO2) cross-link. Residues 111 to 188 enclose the RRM 2 domain; that stretch reads GFVRLRGLPF…RYIEIFKSSR (78 aa). Arg-233 bears the Dimethylated arginine; alternate mark. The residue at position 233 (Arg-233) is an Omega-N-methylarginine; alternate. The 1-1 repeat unit spans residues 234–249; the sequence is GAYGGGYGGYDDYNGY. Residues 234–433 form a 2 X 16 AA Gly-rich approximate repeats region; the sequence is GAYGGGYGGY…YGGQSSMSGY (200 aa). The residue at position 246 (Tyr-246) is a Phosphotyrosine. Residues 289–364 enclose the RRM 3 domain; it reads HCVHMRGLPY…RYVELFLNST (76 aa). At Ser-310 the chain carries Phosphoserine. Repeat copies occupy residues 354–372, 374–392, and 418–433. The interval 354-392 is 2 X 19 AA perfect repeats; the sequence is HRYVELFLNSTAGASGGAYEHRYVELFLNSTAGASGGAY.

As to quaternary structure, part of a ternary complex containing FUBP2, PTBP1, PTBP2 and HNRNPH1. Identified in the spliceosome C complex. Interacts with IGF2BP1. Interacts with CUGBP1; the interaction is RNA-dependent. Interacts with MBNL1; the interaction in RNA-independent.

Its subcellular location is the nucleus. The protein resides in the nucleoplasm. This protein is a component of the heterogeneous nuclear ribonucleoprotein (hnRNP) complexes which provide the substrate for the processing events that pre-mRNAs undergo before becoming functional, translatable mRNAs in the cytoplasm. Mediates pre-mRNA alternative splicing regulation. Inhibits, together with CUGBP1, insulin receptor (IR) pre-mRNA exon 11 inclusion in myoblast. Binds to the IR RNA. Binds poly(RG). The chain is Heterogeneous nuclear ribonucleoprotein H (Hnrnph1) from Mus musculus (Mouse).